Consider the following 672-residue polypeptide: DNA mismatch repair protein MutL (672 aa).

Polar residues predominate over residues 443–454; sequence SYTSDSNQYENS. A disordered region spans residues 443–469; it reads SYTSDSNQYENSCKSDVDKESKSKTTG. The span at 455–465 shows a compositional bias: basic and acidic residues; it reads CKSDVDKESKS.

The protein belongs to the DNA mismatch repair MutL/HexB family.

Its function is as follows. This protein is involved in the repair of mismatches in DNA. It is required for dam-dependent methyl-directed DNA mismatch repair. May act as a 'molecular matchmaker', a protein that promotes the formation of a stable complex between two or more DNA-binding proteins in an ATP-dependent manner without itself being part of a final effector complex. This chain is DNA mismatch repair protein MutL, found in Clostridium botulinum (strain Eklund 17B / Type B).